The sequence spans 422 residues: Glutamyl-tRNA reductase (422 aa).

Substrate is bound by residues 49 to 52 (TCNR), serine 107, 112 to 114 (EPQ), and glutamine 118. The active-site Nucleophile is cysteine 50. 187–192 (GAGETI) lines the NADP(+) pocket.

The protein belongs to the glutamyl-tRNA reductase family. In terms of assembly, homodimer.

The enzyme catalyses (S)-4-amino-5-oxopentanoate + tRNA(Glu) + NADP(+) = L-glutamyl-tRNA(Glu) + NADPH + H(+). Its pathway is porphyrin-containing compound metabolism; protoporphyrin-IX biosynthesis; 5-aminolevulinate from L-glutamyl-tRNA(Glu): step 1/2. Functionally, catalyzes the NADPH-dependent reduction of glutamyl-tRNA(Glu) to glutamate 1-semialdehyde (GSA). This Pseudomonas paraeruginosa (strain DSM 24068 / PA7) (Pseudomonas aeruginosa (strain PA7)) protein is Glutamyl-tRNA reductase.